The chain runs to 162 residues: Interleukin-2 (162 aa).

The first 20 residues, 1-20, serve as a signal peptide directing secretion; sequence MYKIQLLSCIALTLALVANG. Thr23 carries O-linked (GalNAc...) threonine glycosylation. A glycan (N-linked (GlcNAc...) asparagine) is linked at Asn70. A disulfide bridge links Cys79 with Cys134.

This sequence belongs to the IL-2 family.

It is found in the secreted. In terms of biological role, cytokine produced by activated CD4-positive helper T-cells and to a lesser extend activated CD8-positive T-cells and natural killer (NK) cells that plays pivotal roles in the immune response and tolerance. Binds to a receptor complex composed of either the high-affinity trimeric IL-2R (IL2RA/CD25, IL2RB/CD122 and IL2RG/CD132) or the low-affinity dimeric IL-2R (IL2RB and IL2RG). Interaction with the receptor leads to oligomerization and conformation changes in the IL-2R subunits resulting in downstream signaling starting with phosphorylation of JAK1 and JAK3. In turn, JAK1 and JAK3 phosphorylate the receptor to form a docking site leading to the phosphorylation of several substrates including STAT5. This process leads to activation of several pathways including STAT, phosphoinositide-3-kinase/PI3K and mitogen-activated protein kinase/MAPK pathways. Functions as a T-cell growth factor and can increase NK-cell cytolytic activity as well. Promotes strong proliferation of activated B-cells and subsequently immunoglobulin production. Plays a pivotal role in regulating the adaptive immune system by controlling the survival and proliferation of regulatory T-cells, which are required for the maintenance of immune tolerance. Moreover, participates in the differentiation and homeostasis of effector T-cell subsets, including Th1, Th2, Th17 as well as memory CD8-positive T-cells. The protein is Interleukin-2 (IL2) of Cervus elaphus (Red deer).